The chain runs to 179 residues: Large ribosomal subunit protein uL6 (179 aa).

The protein belongs to the universal ribosomal protein uL6 family. Part of the 50S ribosomal subunit.

In terms of biological role, this protein binds to the 23S rRNA, and is important in its secondary structure. It is located near the subunit interface in the base of the L7/L12 stalk, and near the tRNA binding site of the peptidyltransferase center. The chain is Large ribosomal subunit protein uL6 from Bifidobacterium adolescentis (strain ATCC 15703 / DSM 20083 / NCTC 11814 / E194a).